The sequence spans 120 residues: Large ribosomal subunit protein uL22 (120 aa).

The disordered stretch occupies residues 1–25 (MFVNKKYTAKGKNLPSSPKKVRPIA).

The protein belongs to the universal ribosomal protein uL22 family. As to quaternary structure, part of the 50S ribosomal subunit.

Functionally, this protein binds specifically to 23S rRNA; its binding is stimulated by other ribosomal proteins, e.g. L4, L17, and L20. It is important during the early stages of 50S assembly. It makes multiple contacts with different domains of the 23S rRNA in the assembled 50S subunit and ribosome. The globular domain of the protein is located near the polypeptide exit tunnel on the outside of the subunit, while an extended beta-hairpin is found that lines the wall of the exit tunnel in the center of the 70S ribosome. The sequence is that of Large ribosomal subunit protein uL22 from Borrelia recurrentis (strain A1).